A 226-amino-acid polypeptide reads, in one-letter code: Probable proteasome subunit beta type-7 (226 aa).

The protein belongs to the peptidase T1B family. As to quaternary structure, the 26S proteasome consists of a 20S proteasome core and two 19S regulatory subunits. The 20S proteasome core is composed of 28 subunits that are arranged in four stacked rings, resulting in a barrel-shaped structure. The two end rings are each formed by seven alpha subunits, and the two central rings are each formed by seven beta subunits. The catalytic chamber with the active sites is on the inside of the barrel.

The protein localises to the cytoplasm. Its subcellular location is the nucleus. Non-catalytic component of the proteasome which degrades poly-ubiquitinated proteins in the cytoplasm and in the nucleus. It is essential for the regulated turnover of proteins and for the removal of misfolded proteins. The proteasome is a multicatalytic proteinase complex that is characterized by its ability to cleave peptides with Arg, Phe, Tyr, Leu, and Glu adjacent to the leaving group at neutral or slightly basic pH. It has an ATP-dependent proteolytic activity. This is Probable proteasome subunit beta type-7 (PRE4) from Encephalitozoon cuniculi (strain GB-M1) (Microsporidian parasite).